Consider the following 995-residue polypeptide: ATP-dependent RNA helicase DBP10 (995 aa).

The tract at residues 1 to 120 is disordered; that stretch reads MAGVQKRKRD…TQTGDDEDDV (120 aa). 2 stretches are compositionally biased toward acidic residues: residues 12 to 25 and 37 to 50; these read EDQD…DDIA and SESD…EVEA. The span at 71 to 81 shows a compositional bias: basic and acidic residues; the sequence is VNNKKKAENKD. At Ser-101 the chain carries Phosphoserine. Residues 137-165 carry the Q motif motif; it reads GSFPSFGLSKIVLNNIKRKGFRQPTPIQR. A Helicase ATP-binding domain is found at 168-340; the sequence is IPLILQSRDI…KAGLVNPVLV (173 aa). Position 181 to 188 (181 to 188) interacts with ATP; the sequence is ARTGSGKT. The short motif at 288 to 291 is the DEAD box element; that stretch reads DEAD. Disordered stretches follow at residues 389–427 and 889–973; these read LQNS…PAAN and GSRE…EQIR. Phosphoserine occurs at positions 398 and 400. 2 stretches are compositionally biased toward basic residues: residues 407–422 and 914–924; these read QKKR…RKQK and VRGKFKHKQMK. The Helicase C-terminal domain maps to 418–568; sequence FRKQKMPAAN…PMYDSLVDVM (151 aa). The span at 964-973 shows a compositional bias: basic and acidic residues; the sequence is SELKSTEQIR.

Belongs to the DEAD box helicase family. DDX54/DBP10 subfamily. Interacts with RRP1 and associates with pre-ribosomal particles.

It is found in the nucleus. The protein resides in the nucleolus. The catalysed reaction is ATP + H2O = ADP + phosphate + H(+). ATP-binding RNA helicase involved in the biogenesis of 60S ribosomal subunits and is required for the normal formation of 25S and 5.8S rRNAs. This Saccharomyces cerevisiae (strain ATCC 204508 / S288c) (Baker's yeast) protein is ATP-dependent RNA helicase DBP10 (DBP10).